We begin with the raw amino-acid sequence, 163 residues long: Putative phosphinothricin acetyltransferase YwnH (163 aa).

One can recognise an N-acetyltransferase domain in the interval 1 to 158; that stretch reads MTLRLAEHRD…DGKRYDLKIL (158 aa). Residues 85–87, 94–98, and 124–126 contribute to the acetyl-CoA site; these read IYI, KGVGS, and NKP.

This sequence belongs to the acetyltransferase family. PAT/BAR subfamily.

The enzyme catalyses phosphinothricin + acetyl-CoA = N-acetylphosphinothricin + CoA + H(+). Functionally, this enzyme is an effector of phosphinothricin tripeptide (PTT or bialaphos) resistance. Inactivates PTT by transfer of an acetyl group. The chain is Putative phosphinothricin acetyltransferase YwnH (ywnH) from Bacillus subtilis (strain 168).